A 504-amino-acid polypeptide reads, in one-letter code: UDP-GalNAc:beta-1,3-N-acetylgalactosaminyltransferase 2 (504 aa).

Residues 1-3 (MRN) lie on the Cytoplasmic side of the membrane. A helical; Signal-anchor for type II membrane protein transmembrane segment spans residues 4-24 (WLVLLCPCVLGAALHLWHLWL). Over 25–504 (RSPPDPHNTG…DPCQCEAKVR (480 aa)) the chain is Lumenal. Residues Asn117 and Asn176 are each glycosylated (N-linked (GlcNAc...) asparagine).

This sequence belongs to the glycosyltransferase 31 family. N-glycosylated. As to expression, present in testis (at protein level). In testis, it is mainly detected in the middle layers of seminiferous tubules at stages XII to II. Strongly expressed in primary and secondary spermatocytes and early round spermatids, but not in spermatogonia, elongating or elongated spermatids, or in Leydig or Sertoli cells.

It is found in the golgi apparatus membrane. The protein resides in the endoplasmic reticulum. It catalyses the reaction 3-O-(N-acetyl-beta-D-glucosaminyl-(1-&gt;4)-alpha-D-mannosyl)-L-threonyl-[protein] + UDP-N-acetyl-alpha-D-galactosamine = 3-O-[beta-D-GalNAc-(1-&gt;3)-beta-D-GlcNAc-(1-&gt;4)-alpha-D-Man]-L-Thr-[protein] + UDP + H(+). It participates in protein modification; protein glycosylation. Its function is as follows. Beta-1,3-N-acetylgalactosaminyltransferase that synthesizes a unique carbohydrate structure, GalNAc-beta-1-3GlcNAc, on N- and O-glycans. Has no galactose nor galactosaminyl transferase activity toward any acceptor substrate. Involved in alpha-dystroglycan (DAG1) glycosylation: acts coordinately with GTDC2/POMGnT2 to synthesize a GalNAc-beta3-GlcNAc-beta-terminus at the 4-position of protein O-mannose in the biosynthesis of the phosphorylated O-mannosyl trisaccharide (N-acetylgalactosamine-beta-3-N-acetylglucosamine-beta-4-(phosphate-6-)mannose), a carbohydrate structure present in alpha-dystroglycan, which is required for binding laminin G-like domain-containing extracellular proteins with high affinity. This chain is UDP-GalNAc:beta-1,3-N-acetylgalactosaminyltransferase 2 (B3galnt2), found in Mus musculus (Mouse).